A 411-amino-acid polypeptide reads, in one-letter code: Isocitrate dehydrogenase [NADP] peroxisomal (411 aa).

Residues 78–80 (TIT) and arginine 85 contribute to the NADP(+) site. A substrate-binding site is contributed by threonine 80. Substrate contacts are provided by residues 97-103 (SPNGTLR), arginine 112, and arginine 135. Residue aspartate 254 participates in Mn(2+) binding. Lysine 262 lines the NADP(+) pocket. Aspartate 277 contacts Mn(2+). Residues 312 to 317 (GTVTRH) and asparagine 330 contribute to the NADP(+) site.

This sequence belongs to the isocitrate and isopropylmalate dehydrogenases family. It depends on Mg(2+) as a cofactor. Mn(2+) is required as a cofactor.

It localises to the peroxisome. It carries out the reaction D-threo-isocitrate + NADP(+) = 2-oxoglutarate + CO2 + NADPH. Its function is as follows. May play a role in N-alkane metabolism, glutamate synthesis, and/or NADPH generation in the peroxisomes. The sequence is that of Isocitrate dehydrogenase [NADP] peroxisomal (IDP2) from Candida tropicalis (Yeast).